The chain runs to 369 residues: Dof zinc finger protein DOF2.5 (369 aa).

Residues 80–134 form a Dof-type zinc finger; the sequence is LNCPRCNSTNTKFCYYNNYSLTQPRYFCKGCRRYWTEGGSLRNVPVGGSSRKNKR. The Zn(2+) site is built by Cys82, Cys85, Cys107, and Cys110. Disordered stretches follow at residues 120 to 149, 203 to 224, 284 to 304, and 322 to 369; these read LRNVPVGGSSRKNKRSSSSSSSNILQTIPS, EGNGNITHQQQPSSSSSVYGSS, TDHQGLGHNSNNRSEALHSDH, and SSSI…GSSW. Low complexity predominate over residues 214–224; sequence PSSSSSVYGSS. The segment covering 284 to 297 has biased composition (polar residues); the sequence is TDHQGLGHNSNNRS. Positions 342–362 are enriched in low complexity; sequence NNNNNNNSSPNNGYWSGMFST.

As to expression, expressed in the vascular system of the mother plant, but not present in the seed and embryo. In maturing siliques, found all through the funiculus connecting the placenta to the ovule, but not in the ovule.

The protein resides in the nucleus. Functionally, transcription factor specifically involved in the maternal control of seed germination. Regulates transcription by binding to a 5'-AA[AG]G-3' consensus core sequence. May ensure the activation of a component that would trigger germination as a consequence of red light perception. The sequence is that of Dof zinc finger protein DOF2.5 (DOF2.5) from Arabidopsis thaliana (Mouse-ear cress).